Consider the following 471-residue polypeptide: Ribulose bisphosphate carboxylase large chain (471 aa).

Substrate is bound by residues Asn-115 and Thr-165. Residue Lys-167 is the Proton acceptor of the active site. Lys-169 is a substrate binding site. Positions 193, 195, and 196 each coordinate Mg(2+). Residue Lys-193 is modified to N6-carboxylysine. The active-site Proton acceptor is His-286. Substrate is bound by residues Arg-287, His-319, and Ser-371.

Belongs to the RuBisCO large chain family. Type I subfamily. As to quaternary structure, heterohexadecamer of 8 large chains and 8 small chains. The cofactor is Mg(2+).

Its subcellular location is the carboxysome. The enzyme catalyses 2 (2R)-3-phosphoglycerate + 2 H(+) = D-ribulose 1,5-bisphosphate + CO2 + H2O. The catalysed reaction is D-ribulose 1,5-bisphosphate + O2 = 2-phosphoglycolate + (2R)-3-phosphoglycerate + 2 H(+). Functionally, ruBisCO catalyzes two reactions: the carboxylation of D-ribulose 1,5-bisphosphate, the primary event in carbon dioxide fixation, as well as the oxidative fragmentation of the pentose substrate in the photorespiration process. Both reactions occur simultaneously and in competition at the same active site. This chain is Ribulose bisphosphate carboxylase large chain, found in Synechococcus sp. (strain RCC307).